The primary structure comprises 307 residues: Transaldolase (307 aa).

The active-site Schiff-base intermediate with substrate is the Lys-125.

It belongs to the transaldolase family. Type 1 subfamily. Homodimer.

The protein localises to the cytoplasm. It carries out the reaction D-sedoheptulose 7-phosphate + D-glyceraldehyde 3-phosphate = D-erythrose 4-phosphate + beta-D-fructose 6-phosphate. The protein operates within carbohydrate degradation; pentose phosphate pathway; D-glyceraldehyde 3-phosphate and beta-D-fructose 6-phosphate from D-ribose 5-phosphate and D-xylulose 5-phosphate (non-oxidative stage): step 2/3. Its function is as follows. Transaldolase is important for the balance of metabolites in the pentose-phosphate pathway. This Pseudomonas paraeruginosa (strain DSM 24068 / PA7) (Pseudomonas aeruginosa (strain PA7)) protein is Transaldolase.